The sequence spans 381 residues: Diguanylate cyclase DosC (381 aa).

His98 is a binding site for heme. In terms of domain architecture, GGDEF spans 325–381; the sequence is TPLSVLIIDVDKFKEINDTWGHNTGDEILRKVSFLSQKRLVKSKILGAGSSRKLAVS. Residue Asp333 coordinates Mg(2+). Residues Asn341 and Asp350 each coordinate substrate.

Requires heme as cofactor. The cofactor is Mg(2+).

The enzyme catalyses 2 GTP = 3',3'-c-di-GMP + 2 diphosphate. The protein operates within purine metabolism; 3',5'-cyclic di-GMP biosynthesis. Its function is as follows. Globin-coupled heme-based oxygen sensor protein displaying diguanylate cyclase (DGC) activity in response to oxygen availability. Thus, catalyzes the synthesis of cyclic diguanylate (c-di-GMP) via the condensation of 2 GTP molecules. Cyclic-di-GMP is a second messenger which controls cell surface-associated traits in bacteria. The protein is Diguanylate cyclase DosC (dosC) of Shigella flexneri serotype 5b (strain 8401).